The primary structure comprises 468 residues: UDP-N-acetylmuramate--L-alanine ligase (468 aa).

ATP is bound at residue 122 to 128 (GSHGKTT).

The protein belongs to the MurCDEF family.

It localises to the cytoplasm. It catalyses the reaction UDP-N-acetyl-alpha-D-muramate + L-alanine + ATP = UDP-N-acetyl-alpha-D-muramoyl-L-alanine + ADP + phosphate + H(+). It functions in the pathway cell wall biogenesis; peptidoglycan biosynthesis. In terms of biological role, cell wall formation. This Synechococcus sp. (strain CC9902) protein is UDP-N-acetylmuramate--L-alanine ligase.